A 66-amino-acid polypeptide reads, in one-letter code: Large ribosomal subunit protein bL35 (66 aa).

Over residues 1-26 (MPKMKTHRGSAKRFKKTASGKLKRGH) the composition is skewed to basic residues. The interval 1-29 (MPKMKTHRGSAKRFKKTASGKLKRGHAYT) is disordered.

It belongs to the bacterial ribosomal protein bL35 family.

This chain is Large ribosomal subunit protein bL35, found in Geobacillus kaustophilus (strain HTA426).